A 317-amino-acid chain; its full sequence is Protoheme IX farnesyltransferase (317 aa).

9 helical membrane-spanning segments follow: residues 39–58 (VMSL…PGSL), 62–84 (LGAI…NMWY), 100–120 (IPAG…LAVG), 123–143 (LVMW…AIFF), 160–180 (IVIG…AVTG), 184–204 (LMPV…FWSL), 233–253 (IMAY…LGDT), 256–276 (VYGL…WRVL), and 293–313 (ARAA…ALAV).

This sequence belongs to the UbiA prenyltransferase family. Protoheme IX farnesyltransferase subfamily.

It is found in the cell inner membrane. The enzyme catalyses heme b + (2E,6E)-farnesyl diphosphate + H2O = Fe(II)-heme o + diphosphate. Its pathway is porphyrin-containing compound metabolism; heme O biosynthesis; heme O from protoheme: step 1/1. Its function is as follows. Converts heme B (protoheme IX) to heme O by substitution of the vinyl group on carbon 2 of heme B porphyrin ring with a hydroxyethyl farnesyl side group. The chain is Protoheme IX farnesyltransferase from Granulibacter bethesdensis (strain ATCC BAA-1260 / CGDNIH1).